Consider the following 398-residue polypeptide: Polyferredoxin protein VhuB (398 aa).

4Fe-4S ferredoxin-type domains are found at residues 2–31 (AGIKIQEDACLVCNACSKACPTEAIEIAPF), 25–53 (AIEIAPFKTCTLCFSCASACPTGALVENN), 54–83 (GKLIYNSSKCIKCGNCATACPTGIKKVDDR), 82–111 (DRFPYSKGHCVLCEKCVDACPIDIISIPGK), 123–152 (QEPIKVTEACVGCSECVPVCPVDAISIEDE), 152–181 (ELAVIDTEKCIYCSVCAQTCPWNAIYVAGK), 191–219 (KSFTVTEECIGCEKCVEVCPGDMITYNRE), 220–249 (DLIVKLPEACPACHLCEQNCPVDAISLEVE), 259–291 (EGLVWYEDKCNYCGPCAIKCPLCPTNAINMINQ), 300–331 (TKTDKDPEFRMCIRCGACVMKCPTGALKMGKI), and 339–368 (NRIEFSPALCNECGECVDVCPQDTLKLTGD). [4Fe-4S] cluster is bound by residues C11, C14, C17, C21, C34, C37, C40, C44, C63, C66, C69, C73, C91, C94, C97, C101, C132, C135, C138, C142, C161, C164, C167, C171, C199, C202, C205, C209, C229, C232, C235, C239, C268, C271, C274, C278, C311, C314, C317, C321, C348, C351, C354, C358, C377, C380, C383, and C387.

[4Fe-4S] cluster serves as cofactor.

The protein is Polyferredoxin protein VhuB (vhuB) of Methanococcus voltae.